The chain runs to 405 residues: Arginine biosynthesis bifunctional protein ArgJ (405 aa).

Residues Thr-155, Lys-181, Thr-192, Glu-278, Asn-400, and Thr-405 each coordinate substrate. Thr-192 acts as the Nucleophile in catalysis.

The protein belongs to the ArgJ family. As to quaternary structure, heterotetramer of two alpha and two beta chains.

The protein resides in the cytoplasm. It carries out the reaction N(2)-acetyl-L-ornithine + L-glutamate = N-acetyl-L-glutamate + L-ornithine. It catalyses the reaction L-glutamate + acetyl-CoA = N-acetyl-L-glutamate + CoA + H(+). It participates in amino-acid biosynthesis; L-arginine biosynthesis; L-ornithine and N-acetyl-L-glutamate from L-glutamate and N(2)-acetyl-L-ornithine (cyclic): step 1/1. The protein operates within amino-acid biosynthesis; L-arginine biosynthesis; N(2)-acetyl-L-ornithine from L-glutamate: step 1/4. Its function is as follows. Catalyzes two activities which are involved in the cyclic version of arginine biosynthesis: the synthesis of N-acetylglutamate from glutamate and acetyl-CoA as the acetyl donor, and of ornithine by transacetylation between N(2)-acetylornithine and glutamate. The sequence is that of Arginine biosynthesis bifunctional protein ArgJ from Dehalococcoides mccartyi (strain CBDB1).